Reading from the N-terminus, the 457-residue chain is Prenyltransferase ucdE (457 aa).

Residues arginine 106, lysine 198, lysine 277, tyrosine 279, tyrosine 382, tyrosine 447, and tyrosine 451 each contribute to the dimethylallyl diphosphate site.

The protein belongs to the tryptophan dimethylallyltransferase family.

The protein operates within secondary metabolite biosynthesis. Nonribosomal peptide synthetase that mediates the biosynthesis of usterphenyllins and uscandidusins, p-terphenyl derivatives. Within the pathway, ucdE prenylates position C-5 of ring A of 3,15-dihydroxyterphenyllin to produce forms usterphenyllin B. UcdE further prenylates position C-14 of ring C of usterphenyllin B to form usterphenyllin A. The pathway begin with the biosynthesis of 4-hydroxyphenylpyruvate (HPPA) from L-tyrosine, possibly by the aminotransferase ucdG. The nonribosomal peptide synthetase ucdA then condenses two HPPA units to produce atromentin. The key step in this pathway is the reduction and dehydration of atromentin to form a terphenyl triol intermediate, performed by the NAD-dependent dehydrogenase ucdB. Further O-methylation by the methyltransferase ucdC forms terphenyllin carrying two methoxy moieties at C-9 and C-12, and subsequent dihydroxylation at C-3 of ring A and C-15 of ring C by the flavin-dependent oxygenase ucdD leads to 3,15-dihydroxyterphenyllin. Prenylation by ucdE at position C-5 of ring A forms usterphenyllin B, and is followed by a second prenylation at position C-14 of ring C to form usterphenyllin A. The following furan ring formation that leads to uscandidusins A and B was proven to be an unexpected spontaneous non-enzymatic reaction. The chain is Prenyltransferase ucdE from Aspergillus ustus.